The chain runs to 81 residues: MAGSTEERPFSDIITSIRYWVIHSITIPSLFVSGWLFVSTGLAYDVFGTPRPNEYFTEDRQDIPLITDRFNALEQLNQYTK.

The helical transmembrane segment at V21–W35 threads the bilayer. H23 provides a ligand contact to heme.

The protein belongs to the PsbE/PsbF family. Heterodimer of an alpha subunit and a beta subunit. PSII is composed of 1 copy each of membrane proteins PsbA, PsbB, PsbC, PsbD, PsbE, PsbF, PsbH, PsbI, PsbJ, PsbK, PsbL, PsbM, PsbT, PsbX, PsbY, PsbZ, Psb30/Ycf12, at least 3 peripheral proteins of the oxygen-evolving complex and a large number of cofactors. It forms dimeric complexes. Requires heme b as cofactor.

Its subcellular location is the plastid. The protein resides in the chloroplast thylakoid membrane. Functionally, this b-type cytochrome is tightly associated with the reaction center of photosystem II (PSII). PSII is a light-driven water:plastoquinone oxidoreductase that uses light energy to abstract electrons from H(2)O, generating O(2) and a proton gradient subsequently used for ATP formation. It consists of a core antenna complex that captures photons, and an electron transfer chain that converts photonic excitation into a charge separation. This is Cytochrome b559 subunit alpha from Mesostigma viride (Green alga).